The primary structure comprises 338 residues: Anthranilate phosphoribosyltransferase (338 aa).

Residues G81, 84–85 (GD), S89, 91–94 (NVST), 109–117 (KHGNRALSS), and A121 each bind 5-phospho-alpha-D-ribose 1-diphosphate. G81 is a binding site for anthranilate. A Mg(2+)-binding site is contributed by S93. N112 serves as a coordination point for anthranilate. Residue R167 coordinates anthranilate. Positions 226 and 227 each coordinate Mg(2+).

The protein belongs to the anthranilate phosphoribosyltransferase family. As to quaternary structure, homodimer. Requires Mg(2+) as cofactor.

The catalysed reaction is N-(5-phospho-beta-D-ribosyl)anthranilate + diphosphate = 5-phospho-alpha-D-ribose 1-diphosphate + anthranilate. Its pathway is amino-acid biosynthesis; L-tryptophan biosynthesis; L-tryptophan from chorismate: step 2/5. Its function is as follows. Catalyzes the transfer of the phosphoribosyl group of 5-phosphorylribose-1-pyrophosphate (PRPP) to anthranilate to yield N-(5'-phosphoribosyl)-anthranilate (PRA). This chain is Anthranilate phosphoribosyltransferase, found in Rhodopseudomonas palustris (strain TIE-1).